A 350-amino-acid polypeptide reads, in one-letter code: Sperm equatorial segment protein 1 (350 aa).

A signal peptide spans 1 to 19; the sequence is MKPLVLLVALLLWPSSVPA. Residue Asn-128 is glycosylated (N-linked (GlcNAc...) asparagine).

Belongs to the SPESP1 family. In terms of processing, glycosylated. In testis there are two predominant forms of 77- and 67-kDa and a form of 47-kDa, whereas in epididymal sperm from caput, corpus, and cauda there are two forms of 47- and 43-kDa. Testis forms contain complex carbohydrate residues. Epididymal sperm forms are N-glycosylated. Then undergoes significant glycosylation in the testis and that the majority of these glycoconjugates are removed by the time sperm reach the caput epididymis. As to expression, highly expressed in testis, where it is localized in the acrosome of postmeiotic stages of spermiogenesis (round and elongating spermatids and in ejaculated spermatozoa) (at protein level). Poorly expressed in placenta and fetal lung.

It is found in the cytoplasmic vesicle. The protein resides in the secretory vesicle. Its subcellular location is the acrosome. In terms of biological role, involved in fertilization ability of sperm. The polypeptide is Sperm equatorial segment protein 1 (Homo sapiens (Human)).